The sequence spans 183 residues: Phosphopantetheine adenylyltransferase (183 aa).

Ser8 is a substrate binding site. ATP-binding positions include 8 to 9 (SF) and His16. Substrate contacts are provided by Lys40, Thr72, and Arg86. Residues 87–89 (GLR), Glu97, and 122–128 (YSFLSSS) each bind ATP.

This sequence belongs to the bacterial CoaD family. As to quaternary structure, homohexamer. Mg(2+) serves as cofactor.

The protein localises to the cytoplasm. The catalysed reaction is (R)-4'-phosphopantetheine + ATP + H(+) = 3'-dephospho-CoA + diphosphate. The protein operates within cofactor biosynthesis; coenzyme A biosynthesis; CoA from (R)-pantothenate: step 4/5. In terms of biological role, reversibly transfers an adenylyl group from ATP to 4'-phosphopantetheine, yielding dephospho-CoA (dPCoA) and pyrophosphate. The sequence is that of Phosphopantetheine adenylyltransferase from Nostoc punctiforme (strain ATCC 29133 / PCC 73102).